The chain runs to 565 residues: uncharacterized protein (565 aa).

Residues 1 to 19 (MRWLATFVALLIAISSVSA) form the signal peptide. Residues 494 to 504 (TGAENVTNNSV) are compositionally biased toward polar residues. The interval 494–525 (TGAENVTNNSVTATTPPAKASQQTPAPATPPV) is disordered. Positions 505 to 519 (TATTPPAKASQQTPA) are enriched in low complexity.

This is an uncharacterized protein from Archaeoglobus fulgidus (strain ATCC 49558 / DSM 4304 / JCM 9628 / NBRC 100126 / VC-16).